A 185-amino-acid chain; its full sequence is Elongation factor P (185 aa).

The protein belongs to the elongation factor P family.

The protein resides in the cytoplasm. It functions in the pathway protein biosynthesis; polypeptide chain elongation. Functionally, involved in peptide bond synthesis. Stimulates efficient translation and peptide-bond synthesis on native or reconstituted 70S ribosomes in vitro. Probably functions indirectly by altering the affinity of the ribosome for aminoacyl-tRNA, thus increasing their reactivity as acceptors for peptidyl transferase. The protein is Elongation factor P of Lysinibacillus sphaericus (strain C3-41).